The following is a 327-amino-acid chain: ATP-dependent 6-phosphofructokinase (327 aa).

ATP is bound by residues Gly11, 72–73 (RS), and 102–105 (GDGS). Asp103 provides a ligand contact to Mg(2+). 127 to 129 (TID) lines the substrate pocket. Asp129 acts as the Proton acceptor in catalysis. An ADP-binding site is contributed by Arg156. Substrate-binding positions include Arg164 and 171-173 (MGR). 187 to 189 (GAE) serves as a coordination point for ADP. Residues Glu224, Arg245, and 251-254 (HIQR) contribute to the substrate site.

It belongs to the phosphofructokinase type A (PFKA) family. ATP-dependent PFK group I subfamily. Prokaryotic clade 'B1' sub-subfamily. Homotetramer. It depends on Mg(2+) as a cofactor.

It is found in the cytoplasm. The enzyme catalyses beta-D-fructose 6-phosphate + ATP = beta-D-fructose 1,6-bisphosphate + ADP + H(+). It functions in the pathway carbohydrate degradation; glycolysis; D-glyceraldehyde 3-phosphate and glycerone phosphate from D-glucose: step 3/4. Allosterically activated by ADP and other diphosphonucleosides, and allosterically inhibited by phosphoenolpyruvate. Functionally, catalyzes the phosphorylation of D-fructose 6-phosphate to fructose 1,6-bisphosphate by ATP, the first committing step of glycolysis. This chain is ATP-dependent 6-phosphofructokinase, found in Sulfurovum sp. (strain NBC37-1).